The primary structure comprises 694 residues: MTRTALVTTALPYANGPLHLGHLVGYIQADIWVRARRLRGDKTWFVCADDTHGTPIMLAAEKAGVTPEAFIASIQASHERDFAAFGVTFDHYDSTNSPVNRELTEAFYTKLEAAGHISRRSVAQFYDPAKGMFLPDRYIKGICPNCGSADQYGDNCEVCGATYAPTELKEPRSVISGATPELRDSEHFFFEVGQFDGFLHEWLAGDVALPGVKAKLKEWLDAEGGLRAWDISRDAPYFGFQMPGQPGKYFYVWLDAPIGYLCSFKTLCAQMGEDFAAHLVDGTQTELHHFIGKDIVNFHGLFWPAVLHGTGHRAPTRLHVNGYLTVDGAKMSKSRGTFVMARTFLDVGLEPEALRYYFAAKSSGGVDDLDLNLGDFIARVNADLVGKFVNLASRCAGFIGKRFDGKLAEALPDAAQYDRFVAALAPIREAYERNDAASAIRQTMALADEANKYIDDTKPWVIAKQDSADAQLQSVCTQGLNLFRVLVAALKPILPRTCAEAEAFLSAPMTSWEDVIRPLTSHTIQPYTALFTRIDPKLIDAMTDASKDTLAAPAAPATTSKAAPAKPDTKPAAAANPQSPISNPSFIGMDDFAKLDLRIGKVLVCECVEGSDKLLRFELDAGELGKRQIFSGIRASYGEPEALVGRSVVFIANLAPRKMRFGISDGMILSAGFDGGALALLDADSGAQPGMPVR.

The 'HIGH' region motif lies at 12–22 (PYANGPLHLGH). Positions 143, 146, 156, and 159 each coordinate Zn(2+). A 'KMSKS' region motif is present at residues 330–334 (KMSKS). An ATP-binding site is contributed by K333. Positions 550-575 (LAAPAAPATTSKAAPAKPDTKPAAAA) are enriched in low complexity. Residues 550–580 (LAAPAAPATTSKAAPAKPDTKPAAAANPQSP) are disordered. The region spanning 591 to 694 (DFAKLDLRIG…SGAQPGMPVR (104 aa)) is the tRNA-binding domain.

The protein belongs to the class-I aminoacyl-tRNA synthetase family. MetG type 1 subfamily. As to quaternary structure, homodimer. Requires Zn(2+) as cofactor.

The protein localises to the cytoplasm. The catalysed reaction is tRNA(Met) + L-methionine + ATP = L-methionyl-tRNA(Met) + AMP + diphosphate. Functionally, is required not only for elongation of protein synthesis but also for the initiation of all mRNA translation through initiator tRNA(fMet) aminoacylation. This is Methionine--tRNA ligase from Xanthomonas oryzae pv. oryzae (strain MAFF 311018).